Consider the following 647-residue polypeptide: Threonine--tRNA ligase (647 aa).

One can recognise a TGS domain in the interval 1 to 61 (MIKITFPDGA…EEDGSIEIVT (61 aa)). Residues 240–538 (DHRKLGKELD…LIETYKGAFP (299 aa)) form a catalytic region. Residues Cys334, His385, and His515 each contribute to the Zn(2+) site.

Belongs to the class-II aminoacyl-tRNA synthetase family. In terms of assembly, homodimer. Requires Zn(2+) as cofactor.

It localises to the cytoplasm. The catalysed reaction is tRNA(Thr) + L-threonine + ATP = L-threonyl-tRNA(Thr) + AMP + diphosphate + H(+). Functionally, catalyzes the attachment of threonine to tRNA(Thr) in a two-step reaction: L-threonine is first activated by ATP to form Thr-AMP and then transferred to the acceptor end of tRNA(Thr). Also edits incorrectly charged L-seryl-tRNA(Thr). The protein is Threonine--tRNA ligase of Streptococcus pyogenes serotype M2 (strain MGAS10270).